The following is a 380-amino-acid chain: GDSL esterase/lipase At3g26430 (380 aa).

An N-terminal signal peptide occupies residues 1 to 25; the sequence is METNLLLVKCVLLASCLIHPRACSP. Serine 38 functions as the Nucleophile in the catalytic mechanism. N-linked (GlcNAc...) asparagine glycosylation is found at asparagine 97, asparagine 115, and asparagine 183. Residues aspartate 346 and histidine 349 contribute to the active site.

Belongs to the 'GDSL' lipolytic enzyme family.

The protein resides in the secreted. The catalysed reaction is hexadecanoate ester + H2O = an aliphatic alcohol + hexadecanoate + H(+). The enzyme catalyses a butanoate ester + H2O = an aliphatic alcohol + butanoate + H(+). Lipase activity is inhibited by phenylmethylsulfonyl fluoride (PMSF), but not neostigmine bromide (NB). Its function is as follows. Lipase that can hydrolyze p-nitrophenyl butyrate and p-nitrophenyl palmitate in vitro. Possesses low activity against p-nitrophenyl acetate. Substrate preference is p-nitrophenyl palmitate &gt; p-nitrophenyl butyrate &gt;&gt; p-nitrophenyl acetate. Lacks cholinesterase activity. The polypeptide is GDSL esterase/lipase At3g26430 (Arabidopsis thaliana (Mouse-ear cress)).